Reading from the N-terminus, the 287-residue chain is Toxin zeta (287 aa).

An ATP-binding site is contributed by 40–47 (GQPGSGKT). Residues 250-287 (MVQNQHQETPEFKAIQQKMESLQPPTPPIPKTPKLPGI) form a disordered region. Residues 273–287 (PPTPPIPKTPKLPGI) show a composition bias toward pro residues.

The protein belongs to the zeta toxin family. As to quaternary structure, in the presence of the epsilon antitoxin, forms an inactive PezA(2)PezT(2) heterotetramer.

The enzyme catalyses UDP-N-acetyl-alpha-D-glucosamine + ATP = UDP-N-acetyl-alpha-D-glucosamine 3'-phosphate + ADP + H(+). Toxic component of a type II toxin-antitoxin (TA) system. Phosphorylates UDP-N-acetyl-D-glucosamine (UNAG) on the 3'-hydroxyl group of the N-acetyl-D-glucosamine moiety, yielding UNAG-3P. UNAG-3P inhibits MurA, the first committed step in cell wall synthesis, which is then blocked. Phosphorylation is inhibited by cognate epsilon antitoxin. Part of a postsegregational killing (PSK) system involved in the killing of plasmid-free cells. The zeta toxin induces programmed cell death. This is Toxin zeta from Streptococcus agalactiae.